The chain runs to 501 residues: IQ domain-containing protein M (501 aa).

Positions 237–247 are enriched in basic and acidic residues; the sequence is ERQPIKPEPKS. Residues 237-262 form a disordered region; the sequence is ERQPIKPEPKSQPRIKGTPNKTDKLD. The 30-residue stretch at 290–319 folds into the IQ domain; sequence LIRMVTVMQAHVRGWLERKRLQRVMTKALD.

This Homo sapiens (Human) protein is IQ domain-containing protein M.